The following is a 372-amino-acid chain: L-selectin (372 aa).

Positions 1–28 (MVFPWRCEGTYWGSRNILKLWVWTLLCC) are cleaved as a signal peptide. The propeptide occupies 29 to 38 (DFLIHHGTHC). Residues 39-332 (WTYHYSEKPM…FSKIKEGDYN (294 aa)) lie on the Extracellular side of the membrane. Residues 55–155 (KFCKQNYTDL…ACHKRKAALC (101 aa)) form the C-type lectin domain. 10 cysteine pairs are disulfide-bonded: cysteine 57/cysteine 155, cysteine 128/cysteine 147, cysteine 128/cysteine 160, cysteine 160/cysteine 171, cysteine 165/cysteine 180, cysteine 182/cysteine 191, cysteine 197/cysteine 241, cysteine 227/cysteine 254, cysteine 259/cysteine 303, and cysteine 289/cysteine 316. Residues asparagine 60 and asparagine 104 are each glycosylated (N-linked (GlcNAc...) asparagine). Residues glutamate 118, asparagine 120, glutamate 126, asparagine 143, and aspartate 144 each contribute to the Ca(2+) site. In terms of domain architecture, EGF-like spans 156-192 (YTASCQPGSCNGRGECVETINNHTCICDAGYYGPQCQ). Asparagine 177 carries N-linked (GlcNAc...) asparagine glycosylation. Sushi domains follow at residues 195–256 (VQCE…ICQV) and 257–318 (VQCE…ICQE). Asparagine 216, asparagine 226, asparagine 246, asparagine 278, asparagine 288, asparagine 308, and asparagine 320 each carry an N-linked (GlcNAc...) asparagine glycan. A helical membrane pass occupies residues 333-355 (PLFIPVAVMVTAFSGLAFLIWLA). The Cytoplasmic portion of the chain corresponds to 356 to 372 (RRLKKGKKSQERMDDPY).

It belongs to the selectin/LECAM family. In terms of assembly, interaction with SELPLG/PSGL1 and PODXL2 is required for promoting recruitment and rolling of leukocytes. This interaction is dependent on the sialyl Lewis X glycan modification of SELPLG and PODXL2, and tyrosine sulfation modifications of SELPLG. Sulfation on 'Tyr-51' of SELPLG is important for L-selectin binding. Post-translationally, N-glycosylated. As to expression, predominantly expressed in lymphoid tissue.

The protein localises to the cell membrane. Calcium-dependent lectin that mediates cell adhesion by binding to glycoproteins on neighboring cells. Mediates the adherence of lymphocytes to endothelial cells of high endothelial venules in peripheral lymph nodes. Promotes initial tethering and rolling of leukocytes in endothelia. This chain is L-selectin (Sell), found in Mus musculus (Mouse).